We begin with the raw amino-acid sequence, 264 residues long: Type III pantothenate kinase (264 aa).

ATP is bound at residue 6–13 (DVRNTSIE). Substrate is bound at residue 109-112 (GADR). The Proton acceptor role is filled by aspartate 111. Aspartate 131 serves as a coordination point for K(+). Threonine 134 is a binding site for ATP. Threonine 185 contributes to the substrate binding site.

The protein belongs to the type III pantothenate kinase family. As to quaternary structure, homodimer. NH4(+) is required as a cofactor. Requires K(+) as cofactor.

The protein resides in the cytoplasm. The enzyme catalyses (R)-pantothenate + ATP = (R)-4'-phosphopantothenate + ADP + H(+). The protein operates within cofactor biosynthesis; coenzyme A biosynthesis; CoA from (R)-pantothenate: step 1/5. In terms of biological role, catalyzes the phosphorylation of pantothenate (Pan), the first step in CoA biosynthesis. In Nocardia farcinica (strain IFM 10152), this protein is Type III pantothenate kinase.